A 2569-amino-acid chain; its full sequence is Highly reducing polyketide synthase pks5 (2569 aa).

Positions 1 to 25 (MVVKFANGVRNRGNGDEGQRGTQRP) are disordered. The Ketosynthase family 3 (KS3) domain occupies 27 to 452 (STPIAIVGMS…GTNVHVIMEA (426 aa)). Catalysis depends on for beta-ketoacyl synthase activity residues Cys200, His335, and His375. The malonyl-CoA:ACP transacylase (MAT) domain stretch occupies residues 572-892 (IFNGQGAQWY…PYLSCLRRNI (321 aa)). The interval 960 to 1097 (HELLGSSVPG…GYVSAEDSSK (138 aa)) is N-terminal hotdog fold. Positions 960 to 1268 (HELLGSSVPG…LRLQKIQAED (309 aa)) are dehydratase (DH) domain. The PKS/mFAS DH domain occupies 960–1270 (HELLGSSVPG…LQKIQAEDDN (311 aa)). His992 serves as the catalytic Proton acceptor; for dehydratase activity. Residues 1117–1270 (RVRHVRPDAM…LQKIQAEDDN (154 aa)) are C-terminal hotdog fold. Asp1179 serves as the catalytic Proton donor; for dehydratase activity. The interval 1457-1567 (LEVGAGTGGA…RKLLKPKGKL (111 aa)) is methyltransferase (CMet) domain. The tract at residues 1855 to 2170 (DLLNKIEFLE…SGTHMGKIVL (316 aa)) is enoyl reductase (ER) domain. The interval 2195–2371 (THLIVGGLRG…AISINLGPVD (177 aa)) is ketoreductase (KR) domain. The Carrier domain maps to 2485-2562 (AARKLVSELI…DFAALVASRS (78 aa)). Ser2522 carries the O-(pantetheine 4'-phosphoryl)serine modification.

Functionally, highly reducing polyketide synthase; part of the gene cluster that mediates the biosynthesis of abscisic acid (ABA), a phytohormone that acts antagonistically toward salicylic acid (SA), jasmonic acid (JA) and ethylene (ETH) signaling, to impede plant defense responses. The first step of the pathway catalyzes the reaction from farnesyl diphosphate to alpha-ionylideneethane performed by the alpha-ionylideneethane synthase abl3 via a three-step reaction mechanism involving 2 neutral intermediates, beta-farnesene and allofarnesene. The cytochrome P450 monooxygenase abl1 might then be involved in the conversion of alpha-ionylideneethane to alpha-ionylideneacetic acid. Alpha-ionylideneacetic acid is further converted to abscisic acid in 2 steps involving the cytochrome P450 monooxygenase abl2 and the short-chain dehydrogenase/reductase abl4, via the intermediates 1'-deoxy-ABA or 1',4'-trans-diol-ABA, depending on the order of action of these 2 enzymes. Abl2 is responsible for the hydroxylation of carbon atom C-1' and abl4 might be involved in the oxidation of the C-4' carbon atom. Pks5 is clearly not involved in the production of ABA. Nonetheless, the possibility cannot be excluded that pks5 may modify ABA into another compound. It also cannot be excluded the possibility that pks5 also has a function completely independent of ABA synthesis. Pks5 is not required for pathogenicity on B.napus cotyledon. The protein is Highly reducing polyketide synthase pks5 of Leptosphaeria maculans (strain JN3 / isolate v23.1.3 / race Av1-4-5-6-7-8) (Blackleg fungus).